Reading from the N-terminus, the 1010-residue chain is Retinoblastoma-related protein 1 (1010 aa).

Positions 1 to 23 (MEGAAPPASSGSEVTGAGSGKVD) are disordered. A domain A region spans residues 419 to 619 (TPVSTAMTTA…EKGSSMYNSL (201 aa)). The tract at residues 419–861 (TPVSTAMTTA…NEVFIPTVKP (443 aa)) is pocket. The tract at residues 620-730 (IVARPTLSAE…PAAGGELCAE (111 aa)) is spacer. The segment at 657–679 (LPPLPFQKQEHSPDKDEVRSPKR) is disordered. The segment covering 664–679 (KQEHSPDKDEVRSPKR) has biased composition (basic and acidic residues). The domain B stretch occupies residues 731–861 (TGIGVFLSKI…NEVFIPTVKP (131 aa)). The disordered stretch occupies residues 868–898 (SGTSPNKKNEEKCAADGPYPESPRLSRFPNL).

This sequence belongs to the retinoblastoma protein (RB) family.

The protein localises to the nucleus. Functionally, regulator of biological processes that recruits a histone deacetylase to control gene transcription. May play a role in the entry into mitosis, negatively regulating the cell proliferation. Formation of stable complexes with geminiviridae replication-associated proteins may create a cellular environment which favors viral DNA replication. This Oryza sativa subsp. japonica (Rice) protein is Retinoblastoma-related protein 1 (RBR1).